The chain runs to 388 residues: STE20-related kinase adapter protein strd-1 (388 aa).

A Protein kinase domain is found at 52 to 335 (YDCVRYMGTC…ASDLKSSAWL (284 aa)). ATP-binding positions include 58 to 66 (MGTCNGGQI) and K82.

The protein belongs to the protein kinase superfamily. STE Ser/Thr protein kinase family. STE20 subfamily. In terms of assembly, interacts with sad-1. Interacts with par-4. In terms of tissue distribution, expressed in nervous system, pharynx and excretory canal. Expressed in germline.

The protein resides in the perikaryon. It localises to the nucleus. The protein localises to the cell projection. Its subcellular location is the dendrite. It is found in the axon. The protein resides in the synapse. It localises to the cytoplasm. The protein localises to the cell cortex. In terms of biological role, pseudokinase which may act as an adapter for kinases sad-1 and par-4 and thereby is involved in several developmental processes. Regulates cell-autonomously both neuronal polarity and synaptic organization when bound to sad-1. Required for sad-1 localization to synapses. Required to establish germline stem cell (GSC) quiescence during dauer development, to promote cell shedding during embryogenesis and to control asymmetric cell division of the Q.p neuroblast lineage, probably when bound to par-4. May be involved in maintaining the integrity of the early embryonic cortex when bound to par-4. In Caenorhabditis elegans, this protein is STE20-related kinase adapter protein strd-1.